A 131-amino-acid chain; its full sequence is Small ribosomal subunit protein uS8 (131 aa).

The protein belongs to the universal ribosomal protein uS8 family. In terms of assembly, part of the 30S ribosomal subunit. Contacts proteins S5 and S12.

In terms of biological role, one of the primary rRNA binding proteins, it binds directly to 16S rRNA central domain where it helps coordinate assembly of the platform of the 30S subunit. The chain is Small ribosomal subunit protein uS8 from Acidithiobacillus ferrooxidans (strain ATCC 23270 / DSM 14882 / CIP 104768 / NCIMB 8455) (Ferrobacillus ferrooxidans (strain ATCC 23270)).